A 627-amino-acid chain; its full sequence is (+)-sabinene synthase, chloroplastic (627 aa).

The transit peptide at 1–46 directs the protein to the chloroplast; the sequence is MSVISIVPLASNSCLYKSLMSSTHELKALCRPIATLGMCRRGKSVM. 3 residues coordinate Mg(2+): Asp378, Asp382, and Asp530. Positions 378–382 match the DDXXD motif motif; sequence DDIYD.

Belongs to the terpene synthase family. Tpsd subfamily. Monomer. It depends on Mg(2+) as a cofactor.

It is found in the plastid. The protein resides in the chloroplast. It catalyses the reaction (2E)-geranyl diphosphate = (1R,5R)-sabinene + diphosphate. It participates in terpene metabolism; oleoresin biosynthesis. In terms of biological role, terpene synthase (TPS) involved in defensive oleoresin formation in conifers in response to insect attack (e.g. white pine weevil P.strobi) or other injury. Produces (+)-sabinene from geranyl diphosphate, but has no activity with geranylgeranyl diphosphate or farnesyl diphosphate. This is (+)-sabinene synthase, chloroplastic (TPS-sab) from Picea sitchensis (Sitka spruce).